Consider the following 543-residue polypeptide: MKQTKYIFVTGGVLSSLGKGIAAASIATLLKNSGLKVSILKADPYINVDPGTMSPFEHGEVFVTDDGAETDLDLGHYERFLDESLSQDNNFTTGRVYQSVIEKERRGEYLGKTIQVIPHIVGEIKDRIKKAGEGKDILIVEIGGTVGDIEGLPFLEAIRALRLEVGKNNAMNIHLTLVPFIKAAGELKTKPTQHSVGELRRIGISPDMIICRSEKALDRDLKDKIAISCGVEKNCVIESVDAASIYQIPLNFLKQDILSPIAEILDLKNLKPNMENWDSLVKRVIAPSNEVKIAFVGKYVDLKESYKSLTEAIIHAGAALDTKVELKWVDSEKLENMESSEVFKDVSGILVAGGFGYRGVEGKIKAIQYARENKIPFLGICLGMQLALVEFARNVLKLKDANSSEFNEKCQNPVVYLIDEFMDTNGEKQIRTAKTPLGGTMRLGAYKCDIKEKSLLAKVYNEVKSVKERHRHRYEANPKYRADFEKHGLIVSGESKGLIEAVELNCHPFFLAVQFHPEFTSRLEHVNPVICSFIKAAINYEDN.

Residues 1–267 (MKQTKYIFVT…LSPIAEILDL (267 aa)) form an amidoligase domain region. Serine 15 contacts CTP. A UTP-binding site is contributed by serine 15. ATP is bound by residues 16–21 (SLGKGI) and aspartate 73. Residues aspartate 73 and glutamate 141 each contribute to the Mg(2+) site. CTP contacts are provided by residues 148-150 (DIE), 188-193 (KTKPTQ), and lysine 224. Residues 188–193 (KTKPTQ) and lysine 224 contribute to the UTP site. The region spanning 292 to 543 (KIAFVGKYVD…IKAAINYEDN (252 aa)) is the Glutamine amidotransferase type-1 domain. Glycine 354 provides a ligand contact to L-glutamine. The active-site Nucleophile; for glutamine hydrolysis is the cysteine 381. L-glutamine-binding positions include 382-385 (LGMQ), glutamate 405, and arginine 473. Active-site residues include histidine 516 and glutamate 518.

It belongs to the CTP synthase family. Homotetramer.

It carries out the reaction UTP + L-glutamine + ATP + H2O = CTP + L-glutamate + ADP + phosphate + 2 H(+). The enzyme catalyses L-glutamine + H2O = L-glutamate + NH4(+). The catalysed reaction is UTP + NH4(+) + ATP = CTP + ADP + phosphate + 2 H(+). Its pathway is pyrimidine metabolism; CTP biosynthesis via de novo pathway; CTP from UDP: step 2/2. Its activity is regulated as follows. Allosterically activated by GTP, when glutamine is the substrate; GTP has no effect on the reaction when ammonia is the substrate. The allosteric effector GTP functions by stabilizing the protein conformation that binds the tetrahedral intermediate(s) formed during glutamine hydrolysis. Inhibited by the product CTP, via allosteric rather than competitive inhibition. Functionally, catalyzes the ATP-dependent amination of UTP to CTP with either L-glutamine or ammonia as the source of nitrogen. Regulates intracellular CTP levels through interactions with the four ribonucleotide triphosphates. The polypeptide is CTP synthase (Campylobacter jejuni subsp. jejuni serotype O:23/36 (strain 81-176)).